A 421-amino-acid polypeptide reads, in one-letter code: Cell division protein FtsZ (421 aa).

GTP is bound by residues 26-30 (GGGGN), 132-134 (GTG), Glu163, Arg167, and Asn211.

This sequence belongs to the FtsZ family. As to quaternary structure, homodimer. Polymerizes to form a dynamic ring structure in a strictly GTP-dependent manner. Interacts directly with several other division proteins.

It is found in the cytoplasm. Its function is as follows. Essential cell division protein that forms a contractile ring structure (Z ring) at the future cell division site. The regulation of the ring assembly controls the timing and the location of cell division. One of the functions of the FtsZ ring is to recruit other cell division proteins to the septum to produce a new cell wall between the dividing cells. Binds GTP and shows GTPase activity. This Haemophilus influenzae (strain ATCC 51907 / DSM 11121 / KW20 / Rd) protein is Cell division protein FtsZ.